The primary structure comprises 816 residues: Microbial collagenase (816 aa).

Residues 1–27 (MSHIRFFPRHRLALACMLASVSSFSFA) form the signal peptide. A Zn(2+)-binding site is contributed by histidine 435. Residue glutamate 436 is part of the active site. Position 439 (histidine 439) interacts with Zn(2+).

The protein belongs to the peptidase M9A family. Zn(2+) is required as a cofactor.

It localises to the secreted. It carries out the reaction Digestion of native collagen in the triple helical region at Xaa-|-Gly bonds. With synthetic peptides, a preference is shown for Gly at P3 and P1', Pro and Ala at P2 and P2', and hydroxyproline, Ala or Arg at P3'.. Its function is as follows. Possesses gelatinolytic activity. Can cause weak haemolysis on blood agar. The protein is Microbial collagenase (prt) of Vibrio parahaemolyticus serotype O3:K6 (strain RIMD 2210633).